Here is a 478-residue protein sequence, read N- to C-terminus: Zinc metalloproteinase/disintegrin (478 aa).

An N-terminal signal peptide occupies residues 1 to 20 (MIEVLLVTICLAAFPYQGSS). Positions 21–187 (IILESGNVND…PIKKASQSNL (167 aa)) are excised as a propeptide. 3 disulfides stabilise this stretch: C304–C384, C344–C368, and C346–C351. H329 provides a ligand contact to Zn(2+). Residue E330 is part of the active site. Residues H333 and H339 each contribute to the Zn(2+) site. The propeptide occupies 390–405 (LRTDTVSTPVSGNELL). Residues 397–478 (TPVSGNELLE…AGCPRNPFHA (82 aa)) enclose the Disintegrin domain. Disulfide bonds link C411-C426, C413-C421, C420-C443, C434-C440, C439-C464, and C452-C471. Residues 456 to 458 (RGD) carry the Cell attachment site motif.

This sequence belongs to the venom metalloproteinase (M12B) family. P-II subfamily. P-IIa sub-subfamily. Monomer. As to expression, expressed by the venom gland.

The protein resides in the secreted. Functionally, binds alpha-5/beta-1 (ITGAV/ITGB1), alpha-V/beta-3 (ITGAV/ITGB3) and alpha-M/beta-2 (ITGAM/ITGB2) integrins. Is a potent inhibitor of platelet aggregation induced by ADP, collagen, and thrombin. Induces neutrophil chemotaxis and inhibits the chemotaxis of human neutrophils toward fMLP, IL-8, and jarastatin itself. Directly activates an integrin-coupled signaling and modulate the MAPK pathway in different ways, leading the neutrophils to express different functional response. Induces Erk-2 translocation to nucleus and a delay of the spontaneous apoptosis of neutrophils. Increases the IL-8 mRNA levels in neutrophils. When injected simultaneously with melanoma cells in mice, jarastatin, flavoridin (FL) and kistrin (KR) significantly reduce tumor lung colonization. Inhibits mouse melanoma B16F10 cell growth in vitro. When it interacts with melanoma cells, it induces actin cytoskeleton rearrangement, increasing actin polymerization and PTK2/FAK1 phosphorylation. Interferes with NF-kappaB translocation in melanoma cells. The polypeptide is Zinc metalloproteinase/disintegrin (Bothrops jararaca (Jararaca)).